The primary structure comprises 602 residues: Multiple epidermal growth factor-like domains protein 9 (602 aa).

The N-terminal stretch at 1-30 (MNGGAERAMRSLPSLGGLALLCCAAAAAAA) is a signal peptide. At 31–514 (AVASAASAGN…LADVSWTQFN (484 aa)) the chain is on the extracellular side. Residues 38-199 (AGNVTGGGGA…PATEAPSSPP (162 aa)) are disordered. N-linked (GlcNAc...) asparagine glycosylation occurs at Asn-40. Composition is skewed to low complexity over residues 68–85 (PRAT…PPRA) and 139–166 (APTR…TVPA). A compositionally biased stretch (pro residues) spans 167-176 (PTTPRTPTPD). N-linked (GlcNAc...) asparagine glycosylation is present at Asn-182. The span at 187–199 (PTPPATEAPSSPP) shows a compositional bias: pro residues. 20 cysteine pairs are disulfide-bonded: Cys-204/Cys-217, Cys-206/Cys-224, Cys-226/Cys-235, Cys-238/Cys-251, Cys-254/Cys-266, Cys-256/Cys-272, Cys-274/Cys-283, Cys-286/Cys-298, Cys-301/Cys-310, Cys-303/Cys-317, Cys-320/Cys-329, Cys-332/Cys-346, Cys-349/Cys-360, Cys-351/Cys-371, Cys-374/Cys-383, Cys-386/Cys-397, Cys-400/Cys-415, Cys-402/Cys-422, Cys-425/Cys-434, and Cys-437/Cys-449. Laminin EGF-like domains follow at residues 204 to 253 (CNCS…LCQP), 254 to 300 (CDCS…GCLP), 301 to 348 (CQCN…ECLR), 349 to 399 (CPCS…ICRK), and 400 to 451 (CQCH…NCIK). 2 N-linked (GlcNAc...) asparagine glycosylation sites follow: Asn-205 and Asn-218. Asn-245 carries N-linked (GlcNAc...) asparagine glycosylation. N-linked (GlcNAc...) asparagine glycosylation is present at Asn-267. Residue Asn-305 is glycosylated (N-linked (GlcNAc...) asparagine). An N-linked (GlcNAc...) asparagine glycan is attached at Asn-428. Residues Asn-468, Asn-481, and Asn-500 are each glycosylated (N-linked (GlcNAc...) asparagine). A helical membrane pass occupies residues 515-535 (IIILTVIIIVVVLLMGFVGAV). Residues 536 to 602 (YMYREYQNRK…LTTPIHNYKA (67 aa)) are Cytoplasmic-facing.

Its subcellular location is the membrane. The polypeptide is Multiple epidermal growth factor-like domains protein 9 (MEGF9) (Homo sapiens (Human)).